The sequence spans 166 residues: Regulatory protein RecX (166 aa).

Belongs to the RecX family.

It is found in the cytoplasm. Its function is as follows. Modulates RecA activity. The protein is Regulatory protein RecX of Salmonella newport (strain SL254).